The chain runs to 582 residues: External alternative NAD(P)H-ubiquinone oxidoreductase B4, mitochondrial (582 aa).

Residues Met-1–Ser-39 constitute a mitochondrion transit peptide. An FAD-binding site is contributed by Lys-65–Arg-95. Leu-227–Phe-263 is an NAD(+) binding site. In terms of domain architecture, EF-hand spans Arg-384 to Arg-419. Ca(2+) contacts are provided by Asp-397, Thr-401, Thr-403, and Asp-408. Residues Phe-573–Ile-582 carry the Microbody targeting signal motif.

This sequence belongs to the NADH dehydrogenase family. FAD is required as a cofactor. Expressed in seedlings, roots, cotyledons, stems, buds and flowers and, to a lower extent, in stems and leaves.

Its subcellular location is the mitochondrion inner membrane. It localises to the peroxisome. It carries out the reaction a quinone + NADH + H(+) = a quinol + NAD(+). The enzyme catalyses a ubiquinone + NADH + H(+) = a ubiquinol + NAD(+). Its activity is regulated as follows. No effect of calcium ions on activity. In terms of biological role, alternative NADH-ubiquinone oxidoreductase which catalyzes the oxidation of mitochondrial NADH does not translocate protons across the inner mitochondrial membrane. NAD(P)H dehydrogenase; more efficient on NADH. In Arabidopsis thaliana (Mouse-ear cress), this protein is External alternative NAD(P)H-ubiquinone oxidoreductase B4, mitochondrial (NDB4).